Here is a 74-residue protein sequence, read N- to C-terminus: U6-agatoxin-Ao1a (74 aa).

An N-terminal signal peptide occupies residues 1 to 19; that stretch reads MRFYIAFFFLLLAADMALS. Residues 20–30 constitute a propeptide that is removed on maturation; the sequence is FEIGNSEELER. Intrachain disulfides connect cysteine 44-cysteine 56, cysteine 49-cysteine 61, and cysteine 55-cysteine 72.

Expressed by the venom gland.

The protein resides in the secreted. This chain is U6-agatoxin-Ao1a, found in Agelena orientalis (Funnel-web spider).